The following is a 464-amino-acid chain: Type I restriction enzyme EcoKI specificity subunit (464 aa).

This sequence belongs to the type-I restriction system S methylase family. In terms of assembly, the type I restriction/modification system is composed of three polypeptides R, M and S. The restriction enzyme has stoichiometry R(2)M(2)S(1). The methyltransferase is composed of M(2)S(1). As to quaternary structure, (Microbial infection) Interacts with Escherichia phage T7 protein Ocr; this interaction leads to the inhibition of the methyltransferase restriction enzyme M.EcoKI composed of M(2)S(1).

The specificity (S) subunit of a type I restriction enzyme; this subunit dictates DNA sequence specificity. The M and S subunits together form a methyltransferase (MTase) that methylates A-2 on the top and A-3 on the bottom strand of the sequence 5'-AACN(6)GTGC-3'. In the presence of the R subunit the complex can also act as an endonuclease, binding to the same target sequence but cutting the DNA some distance from this site. Whether the DNA is cut or modified depends on the methylation state of the target sequence. When the target site is unmodified, the DNA is cut. When the target site is hemimethylated, the complex acts as a maintenance MTase modifying the DNA so that both strands become methylated. After locating a non-methylated recognition site, the enzyme complex serves as a molecular motor that translocates DNA in an ATP-dependent manner until a collision occurs that triggers cleavage. The chain is Type I restriction enzyme EcoKI specificity subunit from Escherichia coli (strain K12).